Reading from the N-terminus, the 373-residue chain is Indole glucosinolate O-methyltransferase 4 (373 aa).

S-adenosyl-L-homocysteine is bound by residues glycine 217, aspartate 240, aspartate 260, methionine 261, and lysine 274. Histidine 278 functions as the Proton acceptor in the catalytic mechanism.

The protein belongs to the class I-like SAM-binding methyltransferase superfamily. Cation-independent O-methyltransferase family. Interacts with B'GAMMA.

The protein operates within secondary metabolite biosynthesis. Its function is as follows. Involved in indole glucosinolate biosynthesis. Catalyzes methoxylation reactions of the glucosinolate indole ring. Converts the hydroxy intermediates 4-hydroxy-indol-3-yl-methylglucosinolate (4OH-I3M) and 1-hydroxy-indol-3-yl-methylglucosinolate (1OH-I3M) to 4-methoxy-indol-3-yl-methylglucosinolate (4MO-I3M) and 1-methoxy-indol-3-yl-methylglucosinolate(1MO-I3M), respectively. This chain is Indole glucosinolate O-methyltransferase 4, found in Arabidopsis thaliana (Mouse-ear cress).